We begin with the raw amino-acid sequence, 207 residues long: Carbonic anhydrase 2 (207 aa).

Residues C51, D53, H104, and C107 each contribute to the Zn(2+) site.

Belongs to the beta-class carbonic anhydrase family. Zn(2+) serves as cofactor.

The catalysed reaction is hydrogencarbonate + H(+) = CO2 + H2O. Catalyzes the reversible hydration of carbon dioxide to form bicarbonate. The sequence is that of Carbonic anhydrase 2 (mtcA2) from Mycobacterium tuberculosis (strain CDC 1551 / Oshkosh).